The sequence spans 1056 residues: ISWI chromatin-remodeling complex ATPase CHR11 (1056 aa).

Positions Met-1–Ala-10 are enriched in low complexity. 2 disordered regions span residues Met-1 to Glu-80 and Lys-133 to Asn-175. Composition is skewed to acidic residues over residues Phe-11–Glu-32 and Pro-60–Lys-73. The stretch at Ser-12 to Ser-105 forms a coiled coil. Residues Lys-141–Ser-151 are compositionally biased toward basic residues. The span at Glu-155–Gly-169 shows a compositional bias: acidic residues. A Helicase ATP-binding domain is found at Ile-201–Glu-366. Asp-214–Thr-221 contacts ATP. Residues Asp-317–His-320 carry the DEAH box motif. One can recognise a Helicase C-terminal domain in the interval Leu-494–Ala-645. Disordered stretches follow at residues Trp-738–Pro-774 and Ile-814–Glu-833. The span at Asp-815–Glu-833 shows a compositional bias: acidic residues. SANT domains lie at Glu-840–Lys-892 and Gln-941–Ile-1002. The tract at residues Glu-1011–Arg-1056 is disordered. A compositionally biased stretch (basic residues) spans Thr-1047–Arg-1056.

The protein belongs to the SNF2/RAD54 helicase family. ISWI subfamily. Interacts with RLT1 and RLT2. Interacts (via C-terminus) with RLT1 (via the DDT domain), RLT2 (via the DDT domain), PTM (via the DDT domain) and DDR4 (via the DDT domain). Binds to FGT1. As to expression, highly expressed in growing tissues such as inflorescence and flower meristems, young leaves and floral organs. Expressed in roots, rosette and cauline leaves, stems, flowers, inflorescences and siliques.

It localises to the nucleus. Possesses intrinsic ATP-dependent nucleosome-remodeling activity. Constitutes the catalytic subunit of several complexes capable of forming ordered nucleosome arrays on chromatin. Involved in the formation of nucleosome distribution patterns. Involved in nuclear proliferation during megagametogenesis and cell expansion in the sporophyte. Required for the maintenance of the plant vegetative phase. In association with RLT1 or RLT2 may prevent the early activation of the vegetative-to-reproductive transition by regulating key genes that contribute to flower timing, such as FT, SEP1, SEP3, AGL8/FUL, SOC1 and FLC. Necessary to acquire heat stress (HS) memory. The polypeptide is ISWI chromatin-remodeling complex ATPase CHR11 (Arabidopsis thaliana (Mouse-ear cress)).